We begin with the raw amino-acid sequence, 448 residues long: Probable glycine dehydrogenase (decarboxylating) subunit 1 (448 aa).

This sequence belongs to the GcvP family. N-terminal subunit subfamily. As to quaternary structure, the glycine cleavage system is composed of four proteins: P, T, L and H. In this organism, the P 'protein' is a heterodimer of two subunits.

It catalyses the reaction N(6)-[(R)-lipoyl]-L-lysyl-[glycine-cleavage complex H protein] + glycine + H(+) = N(6)-[(R)-S(8)-aminomethyldihydrolipoyl]-L-lysyl-[glycine-cleavage complex H protein] + CO2. Its function is as follows. The glycine cleavage system catalyzes the degradation of glycine. The P protein binds the alpha-amino group of glycine through its pyridoxal phosphate cofactor; CO(2) is released and the remaining methylamine moiety is then transferred to the lipoamide cofactor of the H protein. The polypeptide is Probable glycine dehydrogenase (decarboxylating) subunit 1 (Shouchella clausii (strain KSM-K16) (Alkalihalobacillus clausii)).